Here is a 67-residue protein sequence, read N- to C-terminus: Large ribosomal subunit protein bL32 (67 aa).

Over residues 1-19 (MAVPKRKMSRSNTRARRSQ) the composition is skewed to basic residues. The interval 1–21 (MAVPKRKMSRSNTRARRSQWK) is disordered.

It belongs to the bacterial ribosomal protein bL32 family.

This is Large ribosomal subunit protein bL32 from Arthrobacter sp. (strain FB24).